We begin with the raw amino-acid sequence, 640 residues long: Chaperone protein HtpG (640 aa).

The interval 1 to 352 (MTEQTATQNY…SADLPLNVSR (352 aa)) is a; substrate-binding. The segment at 353–571 (ELLQESRDVK…DGELSPQLIR (219 aa)) is b. A c region spans residues 572–640 (MLKQAGQAVP…VKRINSLLLK (69 aa)).

Belongs to the heat shock protein 90 family. In terms of assembly, homodimer.

It is found in the cytoplasm. Its function is as follows. Molecular chaperone. Has ATPase activity. This Acinetobacter baylyi (strain ATCC 33305 / BD413 / ADP1) protein is Chaperone protein HtpG.